The following is a 424-amino-acid chain: Histidine--tRNA ligase (424 aa).

Belongs to the class-II aminoacyl-tRNA synthetase family. As to quaternary structure, homodimer.

It localises to the cytoplasm. The enzyme catalyses tRNA(His) + L-histidine + ATP = L-histidyl-tRNA(His) + AMP + diphosphate + H(+). The polypeptide is Histidine--tRNA ligase (Salmonella paratyphi A (strain ATCC 9150 / SARB42)).